Reading from the N-terminus, the 619-residue chain is MAGPDQHYEPAIDKRDFDDHRPLLHDIDTGIDGTGDGRLRSDSRLSAFRNLDGGSDGLLNDVVDEIVERDRRKMAMEVMRVCSFAVGVISCLGAGSITAFSLYGPLFLTRLHYSQLQVNAVSIAAEISMYLPVPLFGYLCDRYTPSPLALLSGLVFGGGYLLAAFAYRSGPLPEAGGEGWPPWVMVVAFVAIGTATSCMYLAAVTTCAKNFGRGKHKGIMLAVPIAGFGLSGMWQSQVATYLLCERREDGSRGDVDVFRYFLFLALFLFCLGVIGTFGLRIVDEEEDQYIDEAVEELERSGLLEESEFFRPRSEVQAAYGTFSDAADGDAPGPELSLTLSEEEREAARLEKEREEEERRKKNWLLNFETRLFLQDQTMWWLAVGFFLVTGPGEAYINNLGTIIQTLTPELHPPNAPSPAGLPSTHVTIIALTSTIARLLTGSLSDFFAPPATHLFPANIESGRRSSQSGPTAKRPTLSRLAFLLPSALLLSLGYLLLSSPLPLQHPGLSHVTTALIGLGYGSAFSLVPIIISVVWGVENFGTNWGIVAMVPAAGAAMWGVIYSRGYQDATDGGNGSPDGQCHGWRCYGFWAVGCTLSVWVAVVAWILAWRGWRRRGVVV.

The next 12 membrane-spanning stretches (helical) occupy residues 88 to 108, 120 to 140, 147 to 167, 184 to 204, 219 to 239, 261 to 281, 377 to 397, 428 to 448, 480 to 500, 515 to 535, 541 to 561, and 589 to 609; these read VISCLGAGSITAFSLYGPLFL, AVSIAAEISMYLPVPLFGYLC, PLALLSGLVFGGGYLLAAFAY, VMVVAFVAIGTATSCMYLAAV, IMLAVPIAGFGLSGMWQSQVA, FLFLALFLFCLGVIGTFGLRI, TMWWLAVGFFLVTGPGEAYIN, IIALTSTIARLLTGSLSDFFA, LAFLLPSALLLSLGYLLLSSP, LIGLGYGSAFSLVPIIISVVW, GTNWGIVAMVPAAGAAMWGVI, and FWAVGCTLSVWVAVVAWILAW.

This sequence belongs to the major facilitator superfamily.

The protein resides in the vacuole membrane. Probable transporter. This Aspergillus fumigatus (strain ATCC MYA-4609 / CBS 101355 / FGSC A1100 / Af293) (Neosartorya fumigata) protein is Probable transporter mch1 (mch1).